The sequence spans 265 residues: Palmitoyltransferase ZDHHC21 (265 aa).

At 1-16 (MGLRIHFVVDPHGWCC) the chain is on the cytoplasmic side. The chain crosses the membrane as a helical span at residues 17 to 37 (MGLIVFVWLYNIVIIPKIVLF). Residues 38–44 (PHYEEGH) lie on the Extracellular side of the membrane. A helical transmembrane segment spans residues 45-65 (IPGILIIIFYGISIFCLVALV). Topologically, residues 66–133 (RASLTDPGRL…NNCVGEDNHW (68 aa)) are cytoplasmic. A DHHC domain is found at 90-140 (ELCNKCNLMRPKRSHHCSRCGHCVRRMDHHCPWINNCVGEDNHWLFLQLCF). The active-site S-palmitoyl cysteine intermediate is the cysteine 120. A helical transmembrane segment spans residues 134–154 (LFLQLCFYTELLTCYALMFSF). The Extracellular portion of the chain corresponds to 155–185 (CHYYYFLPLKKRNLDLFVVRHELAIMRLAAF). A helical membrane pass occupies residues 186–206 (MGITMLVGITGLFYTQLIGII). Over 207–265 (TDTTSIEKMSNCCEEISRPRKPWQQTFSEVFGTRWKILWFIPFRQRQPLRVPYHFANHV) the chain is Cytoplasmic.

This sequence belongs to the DHHC palmitoyltransferase family. In terms of tissue distribution, widely expressed. Expressed in Henle's layer within the hair bulb and the hair shaft cuticle (at protein level). Expression is limited to the post-mitotic lineages of inner root sheath (IRS) and cuticle.

It is found in the golgi apparatus membrane. It localises to the golgi apparatus. Its subcellular location is the cis-Golgi network membrane. The protein localises to the cell membrane. The catalysed reaction is L-cysteinyl-[protein] + hexadecanoyl-CoA = S-hexadecanoyl-L-cysteinyl-[protein] + CoA. Its function is as follows. Palmitoyltransferase that catalyzes the addition of palmitate onto various protein substrates. Palmitoylates sex steroid hormone receptors, including ESR1, PGR and AR, thereby regulating their targeting to the plasma membrane. This affects rapid intracellular signaling by sex hormones via ERK and AKT kinases and the generation of cAMP, but does not affect that mediated by their nuclear receptor. Palmitoylates FYN, regulates its localization in hair follicles and plays a key role in epidermal homeostasis and hair follicle differentiation. Through the palmitoylation of PLCB1 and the regulation of PLCB1 downstream signaling may indirectly regulate the function of the endothelial barrier and the adhesion of leukocytes to the endothelium. Also has a palmitoyltransferase activity toward ADRA1D, positively regulating its activity and expression and may thereby play a role in vascular contraction. May also palmitoylate eNOS and LCK. The polypeptide is Palmitoyltransferase ZDHHC21 (Mus musculus (Mouse)).